A 338-amino-acid polypeptide reads, in one-letter code: Hydroxyproline O-galactosyltransferase HPGT1 (338 aa).

Residues 1-12 (MARKGSSIRLSS) lie on the Cytoplasmic side of the membrane. A helical; Signal-anchor for type II membrane protein transmembrane segment spans residues 13 to 32 (SRISTLLLFMFATFASFYVA). At 33-338 (GRLWQESQTR…WSSEAICAGV (306 aa)) the chain is on the lumenal side.

The protein belongs to the glycosyltransferase 31 family. The cofactor is Mn(2+). In terms of tissue distribution, expressed in roots, rosette leaves, cauline leaves, stems, flowers and siliques.

It is found in the golgi apparatus membrane. Its pathway is protein modification; protein glycosylation. In terms of biological role, possesses hydroxyproline O-galactosyltransferase activity. Transfers galactose from UDP-galactose to hydroxyproline residues in the arabinogalactan proteins (AGPs). Is specific for AGPs containing non-contiguous peptidyl hydroxyproline residues. The addition of galactose onto the peptidyl hydroxyproline residues in AGP core proteins represents the first committed step in arabinogalactan polysaccharide addition. AGP glycans play essential roles in both vegetative and reproductive plant growth. The polypeptide is Hydroxyproline O-galactosyltransferase HPGT1 (Arabidopsis thaliana (Mouse-ear cress)).